The sequence spans 433 residues: Actin-related protein 4 (433 aa).

Positions 289-317 (GSDEEMNEEPSKPIEQTENNEVSQQDSSV) are disordered. Residues 302–317 (IEQTENNEVSQQDSSV) are compositionally biased toward polar residues.

This sequence belongs to the actin family. ARP4 subfamily. Component of the NuA4 histone acetyltransferase complex, of the INO80 chromatin remodeling complex, and of the SWR1 chromatin remodeling complex.

The protein resides in the nucleus. Chromatin interaction component of the NuA4 histone acetyltransferase complex which is involved in transcriptional activation of selected genes principally by acetylation of nucleosomal histone H4 and H2A. The NuA4 complex is also involved in DNA repair. Is required for NuA4 complex integrity. Component of the SWR1 complex which mediates the ATP-dependent exchange of histone H2A for the H2A variant HZT1 leading to transcriptional regulation of selected genes by chromatin remodeling. Component of the INO80 complex which remodels chromatin by shifting nucleosomes and is involved in DNA repair. This is Actin-related protein 4 (alp5) from Schizosaccharomyces pombe (strain 972 / ATCC 24843) (Fission yeast).